We begin with the raw amino-acid sequence, 578 residues long: Adenine deaminase (578 aa).

Belongs to the metallo-dependent hydrolases superfamily. Adenine deaminase family. It depends on Mn(2+) as a cofactor.

It carries out the reaction adenine + H2O + H(+) = hypoxanthine + NH4(+). In Ligilactobacillus salivarius (strain UCC118) (Lactobacillus salivarius), this protein is Adenine deaminase.